A 121-amino-acid chain; its full sequence is uncharacterized protein (121 aa).

2 disordered regions span residues 38 to 76 (NQMA…KYQQ) and 91 to 121 (SVLR…KQEN). Residues 43-63 (KRNKQSKKPKQTSKGVKKSSK) show a composition bias toward basic residues. Residues 64-76 (QNKNSSKNNKYQQ) are compositionally biased toward low complexity.

This is an uncharacterized protein from Schizosaccharomyces pombe (strain 972 / ATCC 24843) (Fission yeast).